Consider the following 912-residue polypeptide: Effector protein hopAE1 (912 aa).

The segment covering 1-13 has biased composition (polar residues); it reads MMPSQITRSSHSS. Positions 1–32 are disordered; it reads MMPSQITRSSHSSLPEVAPASGDATGVSEQTP.

It belongs to the HopW family.

The protein resides in the secreted. In Pseudomonas savastanoi pv. phaseolicola (strain 1448A / Race 6) (Pseudomonas syringae pv. phaseolicola (strain 1448A / Race 6)), this protein is Effector protein hopAE1 (hopAE1).